We begin with the raw amino-acid sequence, 111 residues long: Cell cycle protein GpsB (111 aa).

Residues 38–72 (IKDYEAFHKEFDQLKQQNARLKRELEEQKVAATQV) are a coiled coil.

The protein belongs to the GpsB family. Forms polymers through the coiled coil domains. Interacts with PBP1, MreC and EzrA.

The protein localises to the cytoplasm. Its function is as follows. Divisome component that associates with the complex late in its assembly, after the Z-ring is formed, and is dependent on DivIC and PBP2B for its recruitment to the divisome. Together with EzrA, is a key component of the system that regulates PBP1 localization during cell cycle progression. Its main role could be the removal of PBP1 from the cell pole after pole maturation is completed. Also contributes to the recruitment of PBP1 to the division complex. Not essential for septum formation. The protein is Cell cycle protein GpsB of Bacillus mycoides (strain KBAB4) (Bacillus weihenstephanensis).